The sequence spans 259 residues: Thiazole synthase (259 aa).

Residue K98 is the Schiff-base intermediate with DXP of the active site. 1-deoxy-D-xylulose 5-phosphate-binding positions include G159, 185-186 (AG), and 207-208 (NS).

Belongs to the ThiG family. Homotetramer. Forms heterodimers with either ThiH or ThiS.

It is found in the cytoplasm. It carries out the reaction [ThiS sulfur-carrier protein]-C-terminal-Gly-aminoethanethioate + 2-iminoacetate + 1-deoxy-D-xylulose 5-phosphate = [ThiS sulfur-carrier protein]-C-terminal Gly-Gly + 2-[(2R,5Z)-2-carboxy-4-methylthiazol-5(2H)-ylidene]ethyl phosphate + 2 H2O + H(+). Its pathway is cofactor biosynthesis; thiamine diphosphate biosynthesis. Functionally, catalyzes the rearrangement of 1-deoxy-D-xylulose 5-phosphate (DXP) to produce the thiazole phosphate moiety of thiamine. Sulfur is provided by the thiocarboxylate moiety of the carrier protein ThiS. In vitro, sulfur can be provided by H(2)S. The chain is Thiazole synthase from Chlorobium limicola (strain DSM 245 / NBRC 103803 / 6330).